Here is a 391-residue protein sequence, read N- to C-terminus: Multidrug resistance protein MdtL (391 aa).

Over methionine 1–arginine 3 the chain is Cytoplasmic. The helical transmembrane segment at phenylalanine 4–valine 24 threads the bilayer. At glycine 25 to histidine 41 the chain is on the periplasmic side. The helical transmembrane segment at isoleucine 42–alanine 62 threads the bilayer. Residues aspartate 63–lysine 68 are Cytoplasmic-facing. Residues proline 69 to glutamate 89 form a helical membrane-spanning segment. Topologically, residues threonine 90–alanine 92 are periplasmic. The helical transmembrane segment at leucine 93 to phenylalanine 113 threads the bilayer. The Cytoplasmic segment spans residues alanine 114–serine 130. The chain crosses the membrane as a helical span at residues leucine 131–methionine 151. Over leucine 152–glutamine 157 the chain is Periplasmic. A helical transmembrane segment spans residues serine 158–leucine 178. Residues lysine 179 to arginine 202 are Cytoplasmic-facing. Residues phenylalanine 203–valine 222 form a helical membrane-spanning segment. Topologically, residues asparagine 223–methionine 244 are periplasmic. A helical transmembrane segment spans residues alanine 245–phenylalanine 265. The Cytoplasmic portion of the chain corresponds to lysine 266–arginine 268. A helical membrane pass occupies residues threonine 269–proline 289. The Periplasmic portion of the chain corresponds to serine 290–alanine 292. A helical transmembrane segment spans residues valine 293–methionine 313. Over serine 314 to threonine 330 the chain is Cytoplasmic. A helical membrane pass occupies residues leucine 331–isoleucine 351. At glycine 352–asparagine 355 the chain is on the periplasmic side. Residues methionine 356–alanine 376 form a helical membrane-spanning segment. Residues proline 377 to alanine 391 lie on the Cytoplasmic side of the membrane.

Belongs to the major facilitator superfamily. DHA1 family. MdtL (TC 2.A.1.2.22) subfamily.

The protein resides in the cell inner membrane. Functionally, confers resistance to chloramphenicol. The sequence is that of Multidrug resistance protein MdtL from Escherichia coli O6:K15:H31 (strain 536 / UPEC).